We begin with the raw amino-acid sequence, 370 residues long: Erythronate-4-phosphate dehydrogenase (370 aa).

Substrate-binding residues include serine 45 and threonine 66. The NAD(+) site is built by aspartate 142 and threonine 169. The active site involves arginine 202. Aspartate 228 is an NAD(+) binding site. Glutamate 233 is a catalytic residue. Histidine 250 acts as the Proton donor in catalysis. Glycine 253 contributes to the NAD(+) binding site. Tyrosine 254 is a substrate binding site.

Belongs to the D-isomer specific 2-hydroxyacid dehydrogenase family. PdxB subfamily. Homodimer.

The protein localises to the cytoplasm. It carries out the reaction 4-phospho-D-erythronate + NAD(+) = (R)-3-hydroxy-2-oxo-4-phosphooxybutanoate + NADH + H(+). The protein operates within cofactor biosynthesis; pyridoxine 5'-phosphate biosynthesis; pyridoxine 5'-phosphate from D-erythrose 4-phosphate: step 2/5. Functionally, catalyzes the oxidation of erythronate-4-phosphate to 3-hydroxy-2-oxo-4-phosphonooxybutanoate. This Teredinibacter turnerae (strain ATCC 39867 / T7901) protein is Erythronate-4-phosphate dehydrogenase.